Here is a 272-residue protein sequence, read N- to C-terminus: Cholesterol 25-hydroxylase (272 aa).

N-linked (GlcNAc...) asparagine glycosylation occurs at N5. Transmembrane regions (helical) follow at residues 38–58 (FFPV…FVVL), 84–104 (LLPC…PVTL), and 121–141 (LLLL…EFFV). Residues 129-263 (LFCLLLFDME…FTHWDKILGT (135 aa)) form the Fatty acid hydroxylase domain. Residues 142–146 (WHLLH) carry the Histidine box-1 motif. The short motif at 157–161 (HKVHH) is the Histidine box-2 element. Residues N163 and N189 are each glycosylated (N-linked (GlcNAc...) asparagine). Residues 238–244 (HHDLHHS) carry the Histidine box-3 motif.

This sequence belongs to the sterol desaturase family. The cofactor is Fe cation. In terms of processing, N-glycosylated.

Its subcellular location is the endoplasmic reticulum membrane. It carries out the reaction cholesterol + AH2 + O2 = 25-hydroxycholesterol + A + H2O. The catalysed reaction is cholesterol + NADPH + O2 + H(+) = 25-hydroxycholesterol + NADP(+) + H2O. Catalyzes the formation of 25-hydroxycholesterol from cholesterol, leading to repress cholesterol biosynthetic enzymes. Plays a key role in cell positioning and movement in lymphoid tissues: 25-hydroxycholesterol is an intermediate in biosynthesis of 7-alpha,25-dihydroxycholesterol (7-alpha,25-OHC), an oxysterol that acts as a ligand for the G protein-coupled receptor GPR183/EBI2, a chemotactic receptor for a number of lymphoid cells. May play an important role in regulating lipid metabolism by synthesizing a corepressor that blocks sterol regulatory element binding protein (SREBP) processing. As an interferon-stimulated gene, has broad antiviral activities against a wide range of enveloped viruses, such as vesicular stomatitis virus (VSV) and SARS coronavirus-2 (SARS-CoV-2). Its product, 25-hydroxycholesterol, activates the ER-localized enzyme ACAT to induce internalization of accessible cholesterol on the plasma membrane and restricts SARS-CoV-2 S protein-mediated fusion which inhibits virus replication. In testis, production of 25-hydroxycholesterol by macrophages plays a role in Leydig cell differentiation. Required to restrain inflammation in macrophages: production of 25-hydroxycholesterol protects macrophages from cholesterol overload, thereby preventing mitochondrial DNA release and subsequent activation of the AIM2 inflammasome. The protein is Cholesterol 25-hydroxylase of Homo sapiens (Human).